An 872-amino-acid polypeptide reads, in one-letter code: Trichohyalin-like protein 1 (872 aa).

Residues 46–81 (CAIHAVERNLNLLNIDSNGAISFDEFVLAIFSFLNV) enclose the EF-hand domain. Over residues 117-127 (QWTEGTSQTQD) the composition is skewed to polar residues. Disordered regions lie at residues 117-759 (QWTE…ERGA), 774-813 (LQQTNVTQGEHQNQAQTASVASPEIRRNQSSASLTNDSSD), and 830-872 (EFLP…APKQ). 8 stretches are compositionally biased toward basic and acidic residues: residues 142 to 155 (SLEERAVEHNRVDP), 164 to 190 (LPVETSEHSDSKNQHLKGDEQSQKVDQ), 218 to 235 (TKGEGQNKEILQKGDILA), 296 to 307 (GKDEPSSEHVDL), 324 to 348 (AAKDESRTAETPEPPIQEKEYETRD), 365 to 375 (RVERKGVRGPE), 399 to 435 (EDKKYHELQESSKEKNAGEDSETHELNSEGGEQKDSE), and 486 to 505 (SGEKNKMTTKIHDKLVKEDD). Polar residues predominate over residues 538 to 570 (NSETSDLFVQGDSQSQTNPFRGSVQGSDSNNPE). Basic and acidic residues-rich tracts occupy residues 571–584 (TQKHLALSEEKRVQ), 592–608 (RGEDEQVTEEHAQEHEG), and 664–684 (TKKDSRKELKDQSPSTKKEED). 2 stretches are compositionally biased toward polar residues: residues 699–708 (ENNAVSQKTC) and 718–729 (SPQQLAGEQSLS). The segment covering 730-751 (TKEHDPSVSESGLEERMQRDQE) has biased composition (basic and acidic residues). Composition is skewed to polar residues over residues 774–793 (LQQTNVTQGEHQNQAQTASV) and 801–812 (NQSSASLTNDSS). Over residues 849–865 (LEDKQGRPQREELEPQK) the composition is skewed to basic and acidic residues.

The protein belongs to the S-100 family.

The protein is Trichohyalin-like protein 1 (TCHHL1) of Bos taurus (Bovine).